The primary structure comprises 53 residues: UPF0391 membrane protein Bcen2424_6479 (53 aa).

2 helical membrane passes run 5 to 25 and 30 to 50; these read AIIF…GIAA and IAKI…LLGV.

This sequence belongs to the UPF0391 family.

The protein resides in the cell membrane. The protein is UPF0391 membrane protein Bcen2424_6479 of Burkholderia cenocepacia (strain HI2424).